We begin with the raw amino-acid sequence, 263 residues long: Small ribosomal subunit protein bS1c (263 aa).

S1 motif domains are found at residues 27–96, 114–178, and 192–260; these read GDIV…LSIR, DSLL…LSHR, and GNII…LSMK.

The protein belongs to the bacterial ribosomal protein bS1 family.

It localises to the plastid. Its subcellular location is the chloroplast. The protein is Small ribosomal subunit protein bS1c (rps1) of Porphyra purpurea (Red seaweed).